Reading from the N-terminus, the 326-residue chain is Probable cell division protein WhiA (326 aa).

The H-T-H motif DNA-binding region spans 275 to 308 (SLDELGRLADPPMTKDAIAGRIRRLLAMADKRAS).

Belongs to the WhiA family.

Its function is as follows. Involved in cell division and chromosome segregation. The chain is Probable cell division protein WhiA from Renibacterium salmoninarum (strain ATCC 33209 / DSM 20767 / JCM 11484 / NBRC 15589 / NCIMB 2235).